The chain runs to 357 residues: Protein pelota homolog (357 aa).

It belongs to the eukaryotic release factor 1 family. Pelota subfamily. In terms of assembly, monomer. The cofactor is a divalent metal cation.

The protein localises to the cytoplasm. Functionally, may function in recognizing stalled ribosomes, interact with stem-loop structures in stalled mRNA molecules, and effect endonucleolytic cleavage of the mRNA. May play a role in the release non-functional ribosomes and degradation of damaged mRNAs. Has endoribonuclease activity. The protein is Protein pelota homolog of Halobacterium salinarum (strain ATCC 29341 / DSM 671 / R1).